The chain runs to 157 residues: Deoxyuridine 5'-triphosphate nucleotidohydrolase (157 aa).

Substrate is bound by residues 73–75 (RSG), Asn-86, and 90–92 (TID).

This sequence belongs to the dUTPase family. It depends on Mg(2+) as a cofactor.

The enzyme catalyses dUTP + H2O = dUMP + diphosphate + H(+). It participates in pyrimidine metabolism; dUMP biosynthesis; dUMP from dCTP (dUTP route): step 2/2. Its function is as follows. This enzyme is involved in nucleotide metabolism: it produces dUMP, the immediate precursor of thymidine nucleotides and it decreases the intracellular concentration of dUTP so that uracil cannot be incorporated into DNA. In Azorhizobium caulinodans (strain ATCC 43989 / DSM 5975 / JCM 20966 / LMG 6465 / NBRC 14845 / NCIMB 13405 / ORS 571), this protein is Deoxyuridine 5'-triphosphate nucleotidohydrolase.